A 147-amino-acid polypeptide reads, in one-letter code: Globin (147 aa).

A Globin domain is found at 2–147 (SFSAAQVDTV…SVANGIGQYQ (146 aa)). Heme b is bound by residues histidine 64 and histidine 95.

Belongs to the globin family. As to quaternary structure, homodimer or homooligomer.

This chain is Globin, found in Aequiyoldia eightsii (Antarctic yoldia).